The sequence spans 565 residues: Phosphatidylinositol 4-kinase gamma 4 (565 aa).

2 consecutive Ubiquitin-like domains span residues 32 to 104 (IVIF…LVVR) and 109 to 187 (RAIS…RPAK). The PI3K/PI4K catalytic domain maps to 257–542 (GYLPVMSTEG…AILPGTSEET (286 aa)). Positions 263-269 (STEGSGG) are G-loop. Residues 264 to 270 (TEGSGGV) and lysine 286 contribute to the ATP site. The disordered stretch occupies residues 291–311 (EPMAKNNPRGLPLSTDGEGLK). 369–372 (QLFV) is an ATP binding site. The tract at residues 402–410 (ANADRHAGN) is catalytic loop. Residues 425–451 (PIDHGYCLPEKFEDCTFEWLYWPQARE) form an activation loop region. Aspartate 427 is a binding site for ATP.

Belongs to the PI3/PI4-kinase family. Type II PI4K subfamily. Interacts with FTIP1 and RPN10. In terms of tissue distribution, specifically expressed in the phloem including companion cells.

The protein resides in the nucleus. The protein localises to the endoplasmic reticulum. The catalysed reaction is a 1,2-diacyl-sn-glycero-3-phospho-(1D-myo-inositol) + ATP = a 1,2-diacyl-sn-glycero-3-phospho-(1D-myo-inositol 4-phosphate) + ADP + H(+). Its function is as follows. The phosphorylation of phosphatidylinositol (PI) to PI4P is the first committed step in the generation of phosphatidylinositol 4,5-bisphosphate (PIP2), a precursor of the second messenger inositol 1,4,5-trisphosphate (InsP3). Involved in the control of flowering under long day conditions by promoting degradation of FTIP1. Recruits FTIP1 for degradation by the 26S proteasome in leaves, which affects RFT1 transport to the shoot apical meristem (SAM). The polypeptide is Phosphatidylinositol 4-kinase gamma 4 (Oryza sativa subsp. japonica (Rice)).